The following is a 430-amino-acid chain: Histidine--tRNA ligase (430 aa).

The protein belongs to the class-II aminoacyl-tRNA synthetase family. As to quaternary structure, homodimer.

The protein resides in the cytoplasm. The catalysed reaction is tRNA(His) + L-histidine + ATP = L-histidyl-tRNA(His) + AMP + diphosphate + H(+). This is Histidine--tRNA ligase from Lactococcus lactis subsp. lactis (strain IL1403) (Streptococcus lactis).